A 508-amino-acid chain; its full sequence is Glutamate--cysteine ligase, chloroplastic (508 aa).

A chloroplast-targeting transit peptide spans 1–59; the sequence is MTTIFRLASSSSPSLRHDATPHNFHIRKTSISNTFSFSSKNSLSFKRILTSGGSRRFIV. Cystine bridges form between Cys172/Cys392 and Cys335/Cys350.

The protein belongs to the carboxylate-amine ligase family. Glutamate--cysteine ligase type 2 subfamily. As to quaternary structure, homodimer or monomer when oxidized or reduced, respectively. In terms of processing, the Cys-172-Cys-392 disulfide bridge is known to modulate the enzyme activity according to the redox status. The oxidized form constitutes the active enzyme.

It localises to the plastid. The protein localises to the chloroplast. The enzyme catalyses L-cysteine + L-glutamate + ATP = gamma-L-glutamyl-L-cysteine + ADP + phosphate + H(+). The protein operates within sulfur metabolism; glutathione biosynthesis; glutathione from L-cysteine and L-glutamate: step 1/2. In Medicago truncatula (Barrel medic), this protein is Glutamate--cysteine ligase, chloroplastic (GSH1).